The chain runs to 349 residues: Fe(3+) ions import ATP-binding protein FbpC (349 aa).

One can recognise an ABC transporter domain in the interval 4-236 (LDFNKIGKSY…PIDEPTATFL (233 aa)). 36–43 (GPSGSGKT) lines the ATP pocket.

The protein belongs to the ABC transporter superfamily. Fe(3+) ion importer (TC 3.A.1.10) family. In terms of assembly, the complex is composed of two ATP-binding proteins (FbpC), two transmembrane proteins (FbpB) and a solute-binding protein (FbpA).

The protein localises to the cell inner membrane. The catalysed reaction is Fe(3+)(out) + ATP + H2O = Fe(3+)(in) + ADP + phosphate + H(+). Functionally, part of the ABC transporter complex FbpABC involved in Fe(3+) ions import. Responsible for energy coupling to the transport system. The polypeptide is Fe(3+) ions import ATP-binding protein FbpC (Yersinia enterocolitica).